The chain runs to 543 residues: Ribosomal protein arginine N-methyltransferase rmt3 (543 aa).

The segment at 58-81 (FCCLFCDSTFTCLKDLWSHCKEAH) adopts a C2H2-type zinc-finger fold. The 327-residue stretch at 217 to 543 (DSYYFESYAG…KADSQSYVLN (327 aa)) folds into the SAM-dependent MTase PRMT-type domain. Arginine 239, glycine 263, aspartate 285, serine 287, isoleucine 313, and glutamate 314 together coordinate S-adenosyl-L-homocysteine. Catalysis depends on residues glutamate 329 and glutamate 338.

Belongs to the class I-like SAM-binding methyltransferase superfamily. Protein arginine N-methyltransferase family. Interacts with ef1a-c, rps2 and rps24. Note=Associates with the 40S ribosomal particle.

The protein resides in the cytoplasm. It is found in the cytosol. It catalyses the reaction L-arginyl-[protein] + S-adenosyl-L-methionine = N(omega)-methyl-L-arginyl-[protein] + S-adenosyl-L-homocysteine + H(+). The enzyme catalyses L-arginyl-[protein] + 2 S-adenosyl-L-methionine = N(omega),N(omega)-dimethyl-L-arginyl-[protein] + 2 S-adenosyl-L-homocysteine + 2 H(+). Methylates (mono and asymmetric dimethylation) the guanidino nitrogens of arginyl residues in ribosomal protein rps2. The sequence is that of Ribosomal protein arginine N-methyltransferase rmt3 (rmt3) from Schizosaccharomyces pombe (strain 972 / ATCC 24843) (Fission yeast).